We begin with the raw amino-acid sequence, 198 residues long: Protein RD3-like (198 aa).

Positions 28 to 57 (KTLLRELKWHLKERERLIQEIENEQKVKKT) form a coiled coil. A disordered region spans residues 133-168 (GSEQEDLEDSGSMDCSAPSVIQGDSSKRADKDEIPT). Over residues 157 to 166 (SSKRADKDEI) the composition is skewed to basic and acidic residues.

This is Protein RD3-like (RD3L) from Homo sapiens (Human).